The chain runs to 314 residues: Beta-lactamase 2 (314 aa).

The signal sequence occupies residues 1-26 (MLHTRIRRATLGAVAALSLVPVMACG). Positions 32 to 47 (DAAEPAGSAPSSSAAA) are enriched in low complexity. The tract at residues 32-51 (DAAEPAGSAPSSSAAAHKPG) is disordered. The active-site Acyl-ester intermediate is Ser-96. Residue 258 to 260 (KTG) coordinates substrate.

It belongs to the class-A beta-lactamase family.

The catalysed reaction is a beta-lactam + H2O = a substituted beta-amino acid. The sequence is that of Beta-lactamase 2 (blaU) from Streptomyces cacaoi.